The chain runs to 428 residues: Adenylosuccinate synthetase (428 aa).

Residues 12–18 (GDEGKGK) and 40–42 (GHS) contribute to the GTP site. D13 serves as the catalytic Proton acceptor. Residues D13 and G40 each coordinate Mg(2+). Residues 13–16 (DEGK), 38–41 (NAGH), T128, R142, Q223, T238, and R302 each bind IMP. H41 serves as the catalytic Proton donor. 298–304 (VTTGRPR) provides a ligand contact to substrate. GTP-binding positions include R304, 330-332 (KLD), and 412-414 (GTG).

The protein belongs to the adenylosuccinate synthetase family. Homodimer. Mg(2+) is required as a cofactor.

It is found in the cytoplasm. It carries out the reaction IMP + L-aspartate + GTP = N(6)-(1,2-dicarboxyethyl)-AMP + GDP + phosphate + 2 H(+). Its pathway is purine metabolism; AMP biosynthesis via de novo pathway; AMP from IMP: step 1/2. In terms of biological role, plays an important role in the de novo pathway of purine nucleotide biosynthesis. Catalyzes the first committed step in the biosynthesis of AMP from IMP. The sequence is that of Adenylosuccinate synthetase from Bifidobacterium longum (strain DJO10A).